Reading from the N-terminus, the 141-residue chain is Auxin-responsive protein SAUR64 (141 aa).

It belongs to the ARG7 family.

The protein resides in the cell membrane. In terms of biological role, may promote auxin-stimulated organ elongation, such as hypocotyls, stamen filaments and petals. The chain is Auxin-responsive protein SAUR64 from Arabidopsis thaliana (Mouse-ear cress).